The following is a 305-amino-acid chain: Fructose-bisphosphate aldolase (305 aa).

Ser49 contributes to the D-glyceraldehyde 3-phosphate binding site. Asp80 (proton donor) is an active-site residue. Zn(2+) contacts are provided by His81, Asp102, Glu132, and His178. Position 179 (Gly179) interacts with dihydroxyacetone phosphate. Zn(2+) is bound at residue His208. Residues 209-211 and 251-254 each bind dihydroxyacetone phosphate; these read GAS and NTDT.

The protein belongs to the class II fructose-bisphosphate aldolase family. Homotetramer. It depends on Zn(2+) as a cofactor.

The catalysed reaction is beta-D-fructose 1,6-bisphosphate = D-glyceraldehyde 3-phosphate + dihydroxyacetone phosphate. It functions in the pathway carbohydrate degradation; glycolysis; D-glyceraldehyde 3-phosphate and glycerone phosphate from D-glucose: step 4/4. Its function is as follows. Catalyzes the aldol condensation of dihydroxyacetone phosphate (DHAP or glycerone-phosphate) with glyceraldehyde 3-phosphate (G3P) to form fructose 1,6-bisphosphate (FBP) in gluconeogenesis and the reverse reaction in glycolysis. The polypeptide is Fructose-bisphosphate aldolase (Thermus caldophilus).